Reading from the N-terminus, the 766-residue chain is Oligopeptide transporter 7 (766 aa).

Positions 1-58 (MEESEQVLPLLTNPKDLTNPSYASSSSSSSEPRDETEDLLLPISDENEEEEEENSPIR) are disordered. Over residues 45-54 (DENEEEEEEN) the composition is skewed to acidic residues. 15 helical membrane passes run 79–99 (MWVLGTLSCILLSFLNQFFWY), 104–124 (LTISAISAQIAVVPLGRLMAA), 154–174 (ITIFANAGAGSVYAIHVVTVV), 184–204 (FFVSFIVIVTTQVLGFGWAGI), 247–267 (FVIAFVCSFAYYVFPGYLFQI), 287–307 (IGSGLHGLGVGAIGLDWSTIS), 324–344 (VGVGFVLVIYVLVPICYWLDV), 390–410 (LCTFFAISYGVGFAALSATIM), 446–466 (VPEWWFWCILVTNVGATIFAC), 477–497 (WWGVLLACTVAIIFTLPIGII), 509–529 (IITEYIIGYIYPGYPVANMCF), 561–581 (FMAQIVGTLISCFVYLTTAWW), 627–647 (LYKSVNWFFLVGAIAPILVWL), 676–696 (ATAVNYTTWVLAGFLSGFVVF), and 709–729 (VLSGALDAGLAFMGVLLYMCL).

Belongs to the oligopeptide OPT transporter (TC 2.A.67.1) family. As to expression, expressed in the major and the first-order veins and in the hydathodes of the leaves. In the roots, expressed in circular zones surrounding lateral root primordia and in some part of the root epidermis. Expressed also in the sepals and the cortical tissues of the stem, but not in the conducting bundles, the petals or the reproductive tissues.

The protein localises to the membrane. Involved in the translocation of tetra- and pentapeptides across the cellular membrane in an energy-dependent manner. May also transport cadmium complexes. This is Oligopeptide transporter 7 (OPT7) from Arabidopsis thaliana (Mouse-ear cress).